Reading from the N-terminus, the 313-residue chain is D-alanine--D-alanine ligase (313 aa).

The 201-residue stretch at 104–304 (KQALVPHGIP…YSDLVEAIIA (201 aa)) folds into the ATP-grasp domain. 130 to 187 (PLPRPYVLKPVNEGSSVGVAIVTAEGNYGSPISAASKGPWQEFDQLLAEPFIRGRELT) provides a ligand contact to ATP. Mg(2+) contacts are provided by Asp-255, Glu-271, and Asn-273.

This sequence belongs to the D-alanine--D-alanine ligase family. Mg(2+) serves as cofactor. Mn(2+) is required as a cofactor.

Its subcellular location is the cytoplasm. It carries out the reaction 2 D-alanine + ATP = D-alanyl-D-alanine + ADP + phosphate + H(+). Its pathway is cell wall biogenesis; peptidoglycan biosynthesis. Cell wall formation. This is D-alanine--D-alanine ligase from Novosphingobium aromaticivorans (strain ATCC 700278 / DSM 12444 / CCUG 56034 / CIP 105152 / NBRC 16084 / F199).